The primary structure comprises 471 residues: MKLPKAIGLVHFIGIGGIGMSGIAEVLHNLGHKVQGSDQSDSANVQRLREKGIEVFVGHRAENLGDAEVVVVSTAIRKSNPELIAAREKLLPVVRRAEMLAELMRFRNAIAIGGTHGKTTTTSLVATLLEAGGLDPTVINGGIINAYGTNARMGEGEWMVVEADESDGTFLKLPADVAVITNIDPEHLDHYGNFDAVRAAFRQFVENVPFYGFGVMCLDHPEVQSLVGRIEDRKIITYGENPQADVRFKNVRIDGTRSIFDVEIRRRRTGQRTELKGLVMPMPGRHNISNATAAIAVANRLGISSEDIAKGLASFGGVKRRFTLTGEWNGVQIFDDYGHHPVEIKAVLKAAREACKGRIIAVHQPHRYTRLASLFEEFAACFNDADSILLAPVYAAGEDAIEGVDSTSLVSRIKSGGHRDARFLSSAELLPEMVAEVAKPGDFVVLLGAGSITSWAAALPKQLEGLSGKSA.

ATP is bound at residue 114–120 (GTHGKTT).

This sequence belongs to the MurCDEF family.

It localises to the cytoplasm. It carries out the reaction UDP-N-acetyl-alpha-D-muramate + L-alanine + ATP = UDP-N-acetyl-alpha-D-muramoyl-L-alanine + ADP + phosphate + H(+). It participates in cell wall biogenesis; peptidoglycan biosynthesis. In terms of biological role, cell wall formation. The protein is UDP-N-acetylmuramate--L-alanine ligase of Rhizobium etli (strain ATCC 51251 / DSM 11541 / JCM 21823 / NBRC 15573 / CFN 42).